The chain runs to 156 residues: tRNA (cytidine(34)-2'-O)-methyltransferase (156 aa).

S-adenosyl-L-methionine-binding residues include Gly102, Leu124, and Ser132.

Belongs to the class IV-like SAM-binding methyltransferase superfamily. RNA methyltransferase TrmH family. TrmL subfamily. Homodimer.

It is found in the cytoplasm. It carries out the reaction cytidine(34) in tRNA + S-adenosyl-L-methionine = 2'-O-methylcytidine(34) in tRNA + S-adenosyl-L-homocysteine + H(+). The catalysed reaction is 5-carboxymethylaminomethyluridine(34) in tRNA(Leu) + S-adenosyl-L-methionine = 5-carboxymethylaminomethyl-2'-O-methyluridine(34) in tRNA(Leu) + S-adenosyl-L-homocysteine + H(+). Functionally, methylates the ribose at the nucleotide 34 wobble position in the two leucyl isoacceptors tRNA(Leu)(CmAA) and tRNA(Leu)(cmnm5UmAA). Catalyzes the methyl transfer from S-adenosyl-L-methionine to the 2'-OH of the wobble nucleotide. The chain is tRNA (cytidine(34)-2'-O)-methyltransferase from Burkholderia cenocepacia (strain HI2424).